We begin with the raw amino-acid sequence, 154 residues long: dCTP deaminase (154 aa).

DCTP-binding positions include 79 to 84, D95, Q124, and Y138; that span reads RSSLAR.

Belongs to the dCTP deaminase family. As to quaternary structure, homotrimer.

It carries out the reaction dCTP + H2O + H(+) = dUTP + NH4(+). The protein operates within pyrimidine metabolism; dUMP biosynthesis; dUMP from dCTP (dUTP route): step 1/2. Its function is as follows. Catalyzes the deamination of dCTP to dUTP. This Pyrococcus abyssi (strain GE5 / Orsay) protein is dCTP deaminase.